A 224-amino-acid chain; its full sequence is LexA repressor (224 aa).

Positions 31–51 (RAEIANTLGFKSANAAEEHLQ) form a DNA-binding region, H-T-H motif. Active-site for autocatalytic cleavage activity residues include Ser142 and Lys179.

Belongs to the peptidase S24 family. As to quaternary structure, homodimer.

It carries out the reaction Hydrolysis of Ala-|-Gly bond in repressor LexA.. Represses a number of genes involved in the response to DNA damage (SOS response), including recA and lexA. In the presence of single-stranded DNA, RecA interacts with LexA causing an autocatalytic cleavage which disrupts the DNA-binding part of LexA, leading to derepression of the SOS regulon and eventually DNA repair. This is LexA repressor from Delftia acidovorans (strain DSM 14801 / SPH-1).